Here is a 514-residue protein sequence, read N- to C-terminus: MDVIKKKHWWQSDALKWSVLGLLGLLVGYLVVLMYAQGEYLFAITTLILSSAGLYIFANRKAYAWRYVYPGMAGMGLFVLFPLVCTIAIAFTNYSSTNQLTFERAQEVLLDRSWQAGKTYNFGLYPAGDEWQLALSDGETGKNYLSDAFKFGREQKLQLKETTAQPEGERANLRVITQNRQALSDITAILPDGNKVMMSSLRQFSGTQPLYTLDGDGTLTNNQSGVKYRPNNQIGFYQSITADGNWGDEKLSPGYTVTTGWKNFTRVFTDEGIQKPFLAIFVWTVVFSLITVFLTVAVGMVLACLVQWEALRGKAVYRVLLILPYAVPSFISILIFKGLFNQSFGEINMMLSALFGVKPAWFSDPTTARTMLIIVNTWLGYPYMMILCMGLLKAIPDDLYEASAMDGAGPFQNFFKITLPLLIKPLTPLMIASFAFNFNNFVLIQLLTNGGPDRLGTTTPAGYTDLLVNYTYRIAFEGGGGQDFGLAAAIATLIFLLVGALAIVNLKATRMKFD.

At methionine 1–lysine 16 the chain is on the cytoplasmic side. The helical transmembrane segment at tryptophan 17–alanine 36 threads the bilayer. Topologically, residues glutamine 37–glutamate 39 are periplasmic. Residues tyrosine 40–phenylalanine 57 traverse the membrane as a helical segment. The Cytoplasmic portion of the chain corresponds to alanine 58–tyrosine 69. The chain crosses the membrane as a helical span at residues proline 70–threonine 92. Residues asparagine 93–tryptophan 283 are Periplasmic-facing. The ABC transmembrane type-1 domain occupies phenylalanine 281 to asparagine 505. The helical transmembrane segment at threonine 284 to valine 306 threads the bilayer. Residues glutamine 307–arginine 318 lie on the Cytoplasmic side of the membrane. A helical membrane pass occupies residues valine 319 to asparagine 341. At glutamine 342–arginine 369 the chain is on the periplasmic side. The helical transmembrane segment at threonine 370–leucine 392 threads the bilayer. Topologically, residues lysine 393–glutamine 412 are cytoplasmic. The helical transmembrane segment at asparagine 413–alanine 435 threads the bilayer. The Periplasmic segment spans residues phenylalanine 436 to aspartate 483. A helical membrane pass occupies residues phenylalanine 484–leucine 506. The Cytoplasmic segment spans residues lysine 507 to aspartate 514.

It belongs to the binding-protein-dependent transport system permease family. MalFG subfamily. The complex is composed of two ATP-binding proteins (MalK), two transmembrane proteins (MalG and MalF) and a solute-binding protein (MalE).

The protein resides in the cell inner membrane. Functionally, part of the ABC transporter complex MalEFGK involved in maltose/maltodextrin import. Probably responsible for the translocation of the substrate across the membrane. This is Maltose/maltodextrin transport system permease protein MalF (malF) from Escherichia coli O157:H7.